The chain runs to 525 residues: GMP synthase [glutamine-hydrolyzing] (525 aa).

The 190-residue stretch at 16 to 205 (PVLVVDFGAQ…LHDFAGLGAQ (190 aa)) folds into the Glutamine amidotransferase type-1 domain. The Nucleophile role is filled by Cys93. Residues His179 and Glu181 contribute to the active site. The region spanning 206-399 (WTPANIANAL…LGLPEEIVAR (194 aa)) is the GMPS ATP-PPase domain. 233–239 (SGGVDSA) is an ATP binding site.

Homodimer.

The enzyme catalyses XMP + L-glutamine + ATP + H2O = GMP + L-glutamate + AMP + diphosphate + 2 H(+). Its pathway is purine metabolism; GMP biosynthesis; GMP from XMP (L-Gln route): step 1/1. In terms of biological role, catalyzes the synthesis of GMP from XMP. The chain is GMP synthase [glutamine-hydrolyzing] (guaA) from Mycobacterium tuberculosis (strain CDC 1551 / Oshkosh).